A 477-amino-acid polypeptide reads, in one-letter code: Aspartyl/glutamyl-tRNA(Asn/Gln) amidotransferase subunit B (477 aa).

Belongs to the GatB/GatE family. GatB subfamily. In terms of assembly, heterotrimer of A, B and C subunits.

It carries out the reaction L-glutamyl-tRNA(Gln) + L-glutamine + ATP + H2O = L-glutaminyl-tRNA(Gln) + L-glutamate + ADP + phosphate + H(+). It catalyses the reaction L-aspartyl-tRNA(Asn) + L-glutamine + ATP + H2O = L-asparaginyl-tRNA(Asn) + L-glutamate + ADP + phosphate + 2 H(+). Functionally, allows the formation of correctly charged Asn-tRNA(Asn) or Gln-tRNA(Gln) through the transamidation of misacylated Asp-tRNA(Asn) or Glu-tRNA(Gln) in organisms which lack either or both of asparaginyl-tRNA or glutaminyl-tRNA synthetases. The reaction takes place in the presence of glutamine and ATP through an activated phospho-Asp-tRNA(Asn) or phospho-Glu-tRNA(Gln). The sequence is that of Aspartyl/glutamyl-tRNA(Asn/Gln) amidotransferase subunit B from Bdellovibrio bacteriovorus (strain ATCC 15356 / DSM 50701 / NCIMB 9529 / HD100).